The chain runs to 351 residues: Photosystem II D2 protein (351 aa).

The helical transmembrane segment at 39 to 59 (CAFLALGGWLTGTTFVTSWYT) threads the bilayer. A chlorophyll a-binding site is contributed by H116. The helical transmembrane segment at 123-139 (GFMLRQFEIARLVGIRP) threads the bilayer. 2 residues coordinate pheophytin a: Q128 and N141. Residues 151–164 (VFVSVFLMYPLGQS) form a helical membrane-spanning segment. Chlorophyll a is bound at residue H196. A helical membrane pass occupies residues 206-226 (GALLCAIHGATVENTLFEDGE). H213 and F260 together coordinate a plastoquinone. H213 is a binding site for Fe cation. H267 serves as a coordination point for Fe cation. Residues 277–293 (GLWMSAVGIVGLALNLR) traverse the membrane as a helical segment.

Belongs to the reaction center PufL/M/PsbA/D family. PSII is composed of 1 copy each of membrane proteins PsbA, PsbB, PsbC, PsbD, PsbE, PsbF, PsbH, PsbI, PsbJ, PsbK, PsbL, PsbM, PsbT, PsbX, PsbY, PsbZ, Psb30/Ycf12, peripheral proteins PsbO, CyanoQ (PsbQ), PsbU, PsbV and a large number of cofactors. It forms dimeric complexes. The cofactor is The D1/D2 heterodimer binds P680, chlorophylls that are the primary electron donor of PSII, and subsequent electron acceptors. It shares a non-heme iron and each subunit binds pheophytin, quinone, additional chlorophylls, carotenoids and lipids. There is also a Cl(-1) ion associated with D1 and D2, which is required for oxygen evolution. The PSII complex binds additional chlorophylls, carotenoids and specific lipids..

Its subcellular location is the cellular thylakoid membrane. It carries out the reaction 2 a plastoquinone + 4 hnu + 2 H2O = 2 a plastoquinol + O2. Photosystem II (PSII) is a light-driven water:plastoquinone oxidoreductase that uses light energy to abstract electrons from H(2)O, generating O(2) and a proton gradient subsequently used for ATP formation. It consists of a core antenna complex that captures photons, and an electron transfer chain that converts photonic excitation into a charge separation. The D1/D2 (PsbA/PsbD) reaction center heterodimer binds P680, the primary electron donor of PSII as well as several subsequent electron acceptors. D2 is needed for assembly of a stable PSII complex. This is Photosystem II D2 protein from Trichormus variabilis (strain ATCC 29413 / PCC 7937) (Anabaena variabilis).